Reading from the N-terminus, the 173-residue chain is Ribosome maturation factor RimM (173 aa).

The PRC barrel domain maps to glutamate 94 to phenylalanine 173.

It belongs to the RimM family. As to quaternary structure, binds ribosomal protein uS19.

Its subcellular location is the cytoplasm. Its function is as follows. An accessory protein needed during the final step in the assembly of 30S ribosomal subunit, possibly for assembly of the head region. Essential for efficient processing of 16S rRNA. May be needed both before and after RbfA during the maturation of 16S rRNA. It has affinity for free ribosomal 30S subunits but not for 70S ribosomes. This Aeromonas salmonicida (strain A449) protein is Ribosome maturation factor RimM.